Consider the following 286-residue polypeptide: Thymidylate synthase (286 aa).

140-141 (RR) contributes to the dUMP binding site. Catalysis depends on cysteine 161, which acts as the Nucleophile. DUMP contacts are provided by residues 185 to 188 (RSND), asparagine 196, and 226 to 228 (HIY). Aspartate 188 is a (6R)-5,10-methylene-5,6,7,8-tetrahydrofolate binding site. Alanine 285 provides a ligand contact to (6R)-5,10-methylene-5,6,7,8-tetrahydrofolate.

It belongs to the thymidylate synthase family. Bacterial-type ThyA subfamily. As to quaternary structure, homodimer.

The protein resides in the cytoplasm. The catalysed reaction is dUMP + (6R)-5,10-methylene-5,6,7,8-tetrahydrofolate = 7,8-dihydrofolate + dTMP. It participates in pyrimidine metabolism; dTTP biosynthesis. Functionally, catalyzes the reductive methylation of 2'-deoxyuridine-5'-monophosphate (dUMP) to 2'-deoxythymidine-5'-monophosphate (dTMP) while utilizing 5,10-methylenetetrahydrofolate (mTHF) as the methyl donor and reductant in the reaction, yielding dihydrofolate (DHF) as a by-product. This enzymatic reaction provides an intracellular de novo source of dTMP, an essential precursor for DNA biosynthesis. In Streptococcus thermophilus (strain CNRZ 1066), this protein is Thymidylate synthase.